The chain runs to 236 residues: Large ribosomal subunit protein uL1 (236 aa).

The protein belongs to the universal ribosomal protein uL1 family. Part of the 50S ribosomal subunit.

In terms of biological role, binds directly to 23S rRNA. The L1 stalk is quite mobile in the ribosome, and is involved in E site tRNA release. Protein L1 is also a translational repressor protein, it controls the translation of the L11 operon by binding to its mRNA. The sequence is that of Large ribosomal subunit protein uL1 from Corynebacterium jeikeium (strain K411).